The primary structure comprises 254 residues: L-rhamnose 1-dehydrogenase (NADP(+)) (254 aa).

NADP(+)-binding residues include glycine 13, serine 15, arginine 16, isoleucine 18, aspartate 64, and asparagine 91. Catalysis depends on serine 144, which acts as the Proton donor. Serine 144, serine 146, glutamine 154, and tyrosine 157 together coordinate beta-L-rhamnose. NADP(+) contacts are provided by tyrosine 157 and lysine 161. The active-site Proton acceptor is tyrosine 157. Lysine 161 functions as the Lowers pKa of active site Tyr in the catalytic mechanism. Threonine 189 contacts beta-L-rhamnose. An NADP(+)-binding site is contributed by isoleucine 190. Beta-L-rhamnose is bound at residue asparagine 195.

Belongs to the short-chain dehydrogenases/reductases (SDR) family.

The enzyme catalyses L-rhamnofuranose + NADP(+) = L-rhamnono-1,4-lactone + NADPH + H(+). It participates in carbohydrate degradation; L-rhamnose degradation. Its function is as follows. Involved in the non-phosphorylated metabolic pathway of L-rhamnose catabolism. Catalyzes the oxidation of L-rhamnose to yield L-rhamnono-1,4-lactone. It can also oxidize L-lyxose and L-mannose, and uses only NADP. In Thermoplasma acidophilum (strain ATCC 25905 / DSM 1728 / JCM 9062 / NBRC 15155 / AMRC-C165), this protein is L-rhamnose 1-dehydrogenase (NADP(+)).